Here is a 448-residue protein sequence, read N- to C-terminus: Methylenetetrahydrofolate--tRNA-(uracil-5-)-methyltransferase TrmFO (448 aa).

13 to 18 contacts FAD; it reads GAGLAG.

Belongs to the MnmG family. TrmFO subfamily. FAD is required as a cofactor.

It localises to the cytoplasm. It carries out the reaction uridine(54) in tRNA + (6R)-5,10-methylene-5,6,7,8-tetrahydrofolate + NADH + H(+) = 5-methyluridine(54) in tRNA + (6S)-5,6,7,8-tetrahydrofolate + NAD(+). The catalysed reaction is uridine(54) in tRNA + (6R)-5,10-methylene-5,6,7,8-tetrahydrofolate + NADPH + H(+) = 5-methyluridine(54) in tRNA + (6S)-5,6,7,8-tetrahydrofolate + NADP(+). In terms of biological role, catalyzes the folate-dependent formation of 5-methyl-uridine at position 54 (M-5-U54) in all tRNAs. This chain is Methylenetetrahydrofolate--tRNA-(uracil-5-)-methyltransferase TrmFO, found in Streptococcus pyogenes serotype M6 (strain ATCC BAA-946 / MGAS10394).